We begin with the raw amino-acid sequence, 286 residues long: uncharacterized protein (286 aa).

6 helical membrane passes run 52–74, 79–101, 142–161, 168–190, 203–225, and 257–276; these read ILWT…LIGL, LIAI…FLFL, WWDP…VSFF, VLVF…GAIL, IQAT…VALV, and IIWI…ASFM.

The protein localises to the cell membrane. This is an uncharacterized protein from Archaeoglobus fulgidus (strain ATCC 49558 / DSM 4304 / JCM 9628 / NBRC 100126 / VC-16).